A 535-amino-acid polypeptide reads, in one-letter code: Sodium/hydrogen exchanger 9B2 (535 aa).

Over residues 1–14 the composition is skewed to basic and acidic residues; that stretch reads MRNQDKRAAHKDSE. Positions 1–70 are disordered; the sequence is MRNQDKRAAH…TPAEPNHLQR (70 aa). The Cytoplasmic portion of the chain corresponds to 1-85; sequence MRNQDKRAAH…ACPPRGLLAR (85 aa). Composition is skewed to polar residues over residues 16–34 and 46–58; these read STEV…QETG and TEGS…NEKM. A helical transmembrane segment spans residues 86-103; that stretch reads VITNVTMVILLWAVVWSV. The Extracellular portion of the chain corresponds to 104–112; that stretch reads TGSECLPGG. The helical transmembrane segment at 113-132 threads the bilayer; that stretch reads NLFGIIMLFYCAIIGGKLFG. Topologically, residues 133–143 are cytoplasmic; that stretch reads LIKLPTLPPLP. A helical membrane pass occupies residues 144 to 160; the sequence is PLLGMLLAGFLIRNVPV. Over 161-170 the chain is Extracellular; sequence ISDNIQIKHK. The helical transmembrane segment at 171-188 threads the bilayer; the sequence is WSSALRSIALSVILVRAG. Residues 189 to 199 are Cytoplasmic-facing; it reads LGLDSNALKKL. Residues 200 to 226 form a helical membrane-spanning segment; sequence KGVCVRLSLGPCLIEACTSAVLAYFLM. Over 227-232 the chain is Extracellular; it reads GLPWQW. A helical membrane pass occupies residues 233-241; sequence GFMLGFVLG. Over 242–269 the chain is Cytoplasmic; sequence AVSPAVVVPSMLLLQEGGYGVEKGIPTL. Na(+)-binding residues include Val243, Gly274, Asp277, and Asp278. A helical transmembrane segment spans residues 270 to 289; that stretch reads LMAAGSFDDILAITGFNTCL. The Extracellular portion of the chain corresponds to 290–299; the sequence is GMAFSTGSTV. Residues 300-323 form a helical membrane-spanning segment; sequence FNVLKGVLEVIIGVVTGLVLGFFI. The Cytoplasmic segment spans residues 324 to 338; sequence QYFPSSDQDNLVWKR. The helical transmembrane segment at 339–356 threads the bilayer; it reads AFLVLGLSVLAVFSSTYF. Residues 357 to 360 are Extracellular-facing; the sequence is GFPG. Residues 361 to 372 traverse the membrane as a helical segment; the sequence is SGGLCTLVTAFL. Over 373–389 the chain is Cytoplasmic; it reads AGRGWASTKTDVEKVIA. Residues 390–410 traverse the membrane as a helical segment; that stretch reads VAWDIFQPLLFGLIGAEVLIT. The Extracellular segment spans residues 411–416; sequence ALRPET. The chain crosses the membrane as a helical span at residues 417 to 439; the sequence is IGLCVATLGIAVLIRILVTYLMV. Topologically, residues 440 to 460 are cytoplasmic; that stretch reads CFAGFNIKEKIFISFAWLPKA. The chain crosses the membrane as a helical span at residues 461-472; the sequence is TVQAAIGSVALD. The Extracellular segment spans residues 473 to 485; sequence TARSHGEKQLEGY. The helical transmembrane segment at 486-508 threads the bilayer; the sequence is GMDVLTVAFLSIIITAPVGSLLI. Residues 509–535 are Cytoplasmic-facing; the sequence is GLLGPRLLQKAEQNKDEEDQGETSIQV.

It belongs to the monovalent cation:proton antiporter 1 (CPA1) transporter (TC 2.A.36) family. Homodimer; dimerization is essential for SLC9B2 activity. Lipids seem to play a role in the stabilization of the dimerization subdomain.

It is found in the cell membrane. Its subcellular location is the mitochondrion membrane. It localises to the endosome membrane. The protein resides in the recycling endosome membrane. The protein localises to the lysosome membrane. It is found in the cytoplasmic vesicle. Its subcellular location is the secretory vesicle. It localises to the synaptic vesicle membrane. The protein resides in the cell projection. The protein localises to the cilium. It is found in the flagellum membrane. Its subcellular location is the basolateral cell membrane. It localises to the apical cell membrane. It carries out the reaction Li(+)(out) + H(+)(in) = Li(+)(in) + H(+)(out). It catalyses the reaction Li(+)(in) + Na(+)(out) = Li(+)(out) + Na(+)(in). The catalysed reaction is Na(+)(in) + H(+)(out) = Na(+)(out) + H(+)(in). Its activity is regulated as follows. Allosterically inhibited by the N-terminal domain. Inhibited by phloretin. Functionally, electroneutral Na(+) Li(+)/H(+) antiporter that extrudes Na(+) or Li(+) in exchange for external protons across the membrane. Uses the proton gradient/membrane potential to extrude sodium. Contributes to the regulation of intracellular pH and sodium homeostasis. Also able to mediate Na(+)/Li(+) antiporter activity in kidney. May play a physiological role in renal tubular function and blood pressure homeostasis. Plays an important role for insulin secretion and clathrin-mediated endocytosis in beta-cells. Involved in sperm motility and fertility. It is controversial whether SLC9B2 plays a role in osteoclast differentiation or not. The protein is Sodium/hydrogen exchanger 9B2 (SLC9B2) of Bison bison bison (North American plains bison).